The sequence spans 115 residues: Replication initiation control protein YabA (115 aa).

Residues His-90, Cys-92, Cys-106, and Cys-109 each coordinate Zn(2+).

Belongs to the YabA family. In terms of assembly, homotetramer. Interacts with both DnaA and DnaN, acting as a bridge between these two proteins. Zn(2+) is required as a cofactor.

It is found in the cytoplasm. The protein resides in the nucleoid. In terms of biological role, involved in control of chromosome replication initiation. Inhibits the cooperative binding of DnaA to the oriC region, thus negatively regulating initiation of chromosome replication. Inhibits the ability of DnaA-ATP to form a helix on DNA; does not disassemble preformed DnaA-DNA helices. Decreases the residence time of DnaA on the chromosome at its binding sites (oriC, replication forks and promoter-binding sites). Tethers DnaA to the replication machinery via the DNA polymerase beta sliding clamp subunit (dnaN). Associates with oriC and other DnaA targets on the chromosome in a DnaA-dependent manner. The protein is Replication initiation control protein YabA of Staphylococcus epidermidis (strain ATCC 35984 / DSM 28319 / BCRC 17069 / CCUG 31568 / BM 3577 / RP62A).